A 42-amino-acid chain; its full sequence is uncharacterized protein (42 aa).

A helical transmembrane segment spans residues Pro15–Ile37.

It localises to the membrane. This is an uncharacterized protein from Dictyostelium discoideum (Social amoeba).